The chain runs to 213 residues: Octanoyltransferase (213 aa).

One can recognise a BPL/LPL catalytic domain in the interval glutamate 32–proline 207. Substrate is bound by residues arginine 71–histidine 78, serine 138–glycine 140, and glycine 151–alanine 153. The active-site Acyl-thioester intermediate is cysteine 169.

Belongs to the LipB family.

The protein localises to the cytoplasm. It carries out the reaction octanoyl-[ACP] + L-lysyl-[protein] = N(6)-octanoyl-L-lysyl-[protein] + holo-[ACP] + H(+). Its pathway is protein modification; protein lipoylation via endogenous pathway; protein N(6)-(lipoyl)lysine from octanoyl-[acyl-carrier-protein]: step 1/2. Its function is as follows. Catalyzes the transfer of endogenously produced octanoic acid from octanoyl-acyl-carrier-protein onto the lipoyl domains of lipoate-dependent enzymes. Lipoyl-ACP can also act as a substrate although octanoyl-ACP is likely to be the physiological substrate. This Citrobacter koseri (strain ATCC BAA-895 / CDC 4225-83 / SGSC4696) protein is Octanoyltransferase.